Reading from the N-terminus, the 586-residue chain is Merlin (586 aa).

Residue Ser9 is modified to Phosphoserine. Residues 18–307 (FTVRIVTMDA…GNHDLFMRRR (290 aa)) form the FERM domain. Residues 325-354 (KARKQMERQRLAREKQMREEAERSRDEPER) form a disordered region. Residue Ser514 is modified to Phosphoserine; by PAK. Residues 557–586 (LHSEHSDSGTSSKHNTIKKPQAQGRRPICI) are disordered.

In terms of assembly, interacts with NHERF1, HGS and AGAP2. Interacts with SGSM3. Interacts (via FERM domain) with MPP1. Interacts with LAYN and WWC1. Interacts with the CUL4A-RBX1-DDB1-VprBP/DCAF1 E3 ubiquitin-protein ligase complex. The unphosphorylated form interacts (via FERM domain) with VPRBP/DCAF1. Interacts (via FERM domain) with NOP53; the interaction is direct. Interacts with SCHIP1; the interaction is direct. Ubiquitinated by the CUL4A-RBX1-DDB1-DCAF1/VprBP E3 ubiquitin-protein ligase complex for ubiquitination and subsequent proteasome-dependent degradation. Post-translationally, phosphorylation of Ser-514 inhibits nuclear localization by disrupting the intramolecular association of the FERM domain with the C-terminal tail. The dephosphorylation of Ser-514 favors the interaction with NOP53.

Its subcellular location is the cell membrane. It is found in the cell projection. The protein localises to the cytoplasm. It localises to the cytoskeleton. The protein resides in the nucleus. Its function is as follows. Probable regulator of the Hippo/SWH (Sav/Wts/Hpo) signaling pathway, a signaling pathway that plays a pivotal role in tumor suppression by restricting proliferation and promoting apoptosis. Along with WWC1 can synergistically induce the phosphorylation of LATS1 and LATS2 and can probably function in the regulation of the Hippo/SWH (Sav/Wts/Hpo) signaling pathway. May act as a membrane stabilizing protein. May inhibit PI3 kinase by binding to AGAP2 and impairing its stimulating activity. Suppresses cell proliferation and tumorigenesis by inhibiting the CUL4A-RBX1-DDB1-VprBP/DCAF1 E3 ubiquitin-protein ligase complex Plays a role in lens development and is required for complete fiber cell terminal differentiation, maintenance of cell polarity and separation of the lens vesicle from the corneal epithelium. The chain is Merlin (Nf2) from Rattus norvegicus (Rat).